The following is a 326-amino-acid chain: DNA-directed RNA polymerase subunit alpha (326 aa).

The interval 1 to 231 (MQTALLKPKI…DQLSVFAALE (231 aa)) is alpha N-terminal domain (alpha-NTD). Residues 247–326 (IDPILLRPVD…ENWPPAGLEK (80 aa)) are alpha C-terminal domain (alpha-CTD).

Belongs to the RNA polymerase alpha chain family. Homodimer. The RNAP catalytic core consists of 2 alpha, 1 beta, 1 beta' and 1 omega subunit. When a sigma factor is associated with the core the holoenzyme is formed, which can initiate transcription.

It catalyses the reaction RNA(n) + a ribonucleoside 5'-triphosphate = RNA(n+1) + diphosphate. DNA-dependent RNA polymerase catalyzes the transcription of DNA into RNA using the four ribonucleoside triphosphates as substrates. This Cupriavidus necator (strain ATCC 17699 / DSM 428 / KCTC 22496 / NCIMB 10442 / H16 / Stanier 337) (Ralstonia eutropha) protein is DNA-directed RNA polymerase subunit alpha.